The sequence spans 352 residues: Selenide, water dikinase (352 aa).

The active site involves cysteine 23. ATP-binding positions include lysine 26 and 54–56 (SRD). Aspartate 57 serves as a coordination point for Mg(2+). ATP-binding positions include aspartate 74, aspartate 97, and 145–147 (GHS). Position 97 (aspartate 97) interacts with Mg(2+). Residue aspartate 233 coordinates Mg(2+).

This sequence belongs to the selenophosphate synthase 1 family. Class I subfamily. In terms of assembly, homodimer. The cofactor is Mg(2+).

The catalysed reaction is hydrogenselenide + ATP + H2O = selenophosphate + AMP + phosphate + 2 H(+). Its function is as follows. Synthesizes selenophosphate from selenide and ATP. This is Selenide, water dikinase from Shewanella sp. (strain ANA-3).